The sequence spans 432 residues: MSRRDVVLTNVTVVQLRRDPCPCPCPCPCPCPCPVIRPPPPPPKVEEPPPPKEEPPPPPPPPPPPQIEPEEPKEAPPPPPPPPPPPPPPPPPPPKPAKELTVGINGFGRIGRLVLRVCMEKGVRVVAVNDPFIDPEYMVYMFKYDSTHGRYKGTVEHKNGRLVVDNLEINVFQCKEPKEIPWSSVGNPYVVEATGVYLSIEAASGHISSGARRVIVTAPSPDAPMLVMGVNEKDYNPGSMTVVSNASCTTNCLAPLAKVIHERFGIVEGLMTTVHAYTATQKTVDGPSKKDWRGGRGAHQNIIPSSTGAAKAVGKVIPELNGKLTGMAFRVPTPNVSVVDLTCRLAQPASYTAIKEAVKAAAKGPMAGILAYTEDQVVSTDFNGDSHSSIFDAKAGIALNDNFVKLVSWYDNEYGYSHRVVDLLRYMFSREK.

Residues Met1–Ala97 are testis-specific N-terminal extension. The interval Pro40–Thr101 is disordered. Over residues Lys44–Pro55 the composition is skewed to basic and acidic residues. 2 stretches are compositionally biased toward pro residues: residues Pro56 to Ile67 and Ala75 to Lys95. NAD(+) is bound by residues Arg109 to Ile110, Asp130, Lys175, Tyr197, and Thr217. D-glyceraldehyde 3-phosphate-binding positions include Ser247 to Thr249, Thr278, Thr307 to Gly308, and Arg330. Cys248 (nucleophile) is an active-site residue. A Phosphoserine modification is found at Ser350. Asn412 contributes to the NAD(+) binding site.

It belongs to the glyceraldehyde-3-phosphate dehydrogenase family. As to quaternary structure, homotetramer. As to expression, expressed in both head and flagellum of epididymal sperm.

The protein resides in the cytoplasm. It catalyses the reaction D-glyceraldehyde 3-phosphate + phosphate + NAD(+) = (2R)-3-phospho-glyceroyl phosphate + NADH + H(+). It functions in the pathway carbohydrate degradation; glycolysis; pyruvate from D-glyceraldehyde 3-phosphate: step 1/5. Functionally, may play an important role in regulating the switch between different pathways for energy production during spermiogenesis and in the spermatozoon. Required for sperm motility and male fertility. The protein is Glyceraldehyde-3-phosphate dehydrogenase, testis-specific (Gapdhs) of Rattus norvegicus (Rat).